The chain runs to 201 residues: Small ribosomal subunit protein uS4c (201 aa).

One can recognise an S4 RNA-binding domain in the interval 89 to 152; that stretch reads MRLDNILFRL…NSRTLVQNLL (64 aa).

It belongs to the universal ribosomal protein uS4 family. As to quaternary structure, part of the 30S ribosomal subunit. Contacts protein S5. The interaction surface between S4 and S5 is involved in control of translational fidelity.

It is found in the plastid. The protein resides in the chloroplast. In terms of biological role, one of the primary rRNA binding proteins, it binds directly to 16S rRNA where it nucleates assembly of the body of the 30S subunit. Its function is as follows. With S5 and S12 plays an important role in translational accuracy. The chain is Small ribosomal subunit protein uS4c (rps4) from Capsella bursa-pastoris (Shepherd's purse).